The following is a 562-amino-acid chain: Glucose-6-phosphate isomerase (562 aa).

Catalysis depends on glutamate 370, which acts as the Proton donor. Residues histidine 401 and lysine 526 contribute to the active site.

Belongs to the GPI family.

Its subcellular location is the cytoplasm. It carries out the reaction alpha-D-glucose 6-phosphate = beta-D-fructose 6-phosphate. Its pathway is carbohydrate biosynthesis; gluconeogenesis. The protein operates within carbohydrate degradation; glycolysis; D-glyceraldehyde 3-phosphate and glycerone phosphate from D-glucose: step 2/4. Functionally, catalyzes the reversible isomerization of glucose-6-phosphate to fructose-6-phosphate. In Deinococcus geothermalis (strain DSM 11300 / CIP 105573 / AG-3a), this protein is Glucose-6-phosphate isomerase.